Here is a 255-residue protein sequence, read N- to C-terminus: D-aminoacyl-tRNA deacylase (255 aa).

The protein belongs to the DtdA deacylase family. Monomer. It depends on Zn(2+) as a cofactor.

The enzyme catalyses a D-aminoacyl-tRNA + H2O = a tRNA + a D-alpha-amino acid + H(+). It carries out the reaction glycyl-tRNA(Ala) + H2O = tRNA(Ala) + glycine + H(+). In terms of biological role, D-aminoacyl-tRNA deacylase with broad substrate specificity. By recycling D-aminoacyl-tRNA to D-amino acids and free tRNA molecules, this enzyme counteracts the toxicity associated with the formation of D-aminoacyl-tRNA entities in vivo. This chain is D-aminoacyl-tRNA deacylase, found in Methanocaldococcus jannaschii (strain ATCC 43067 / DSM 2661 / JAL-1 / JCM 10045 / NBRC 100440) (Methanococcus jannaschii).